The chain runs to 211 residues: Small ribosomal subunit protein uS3 (211 aa).

Positions 38-106 (LRKFIKKAFY…NIELNIIEVK (69 aa)) constitute a KH type-2 domain.

Belongs to the universal ribosomal protein uS3 family. As to quaternary structure, part of the 30S ribosomal subunit. Forms a tight complex with proteins S10 and S14.

Functionally, binds the lower part of the 30S subunit head. Binds mRNA in the 70S ribosome, positioning it for translation. The chain is Small ribosomal subunit protein uS3 from Ehrlichia chaffeensis (strain ATCC CRL-10679 / Arkansas).